The primary structure comprises 262 residues: Large ribosomal subunit protein uL10m (262 aa).

The N-terminal 28 residues, Met1–His28, are a transit peptide targeting the mitochondrion. The segment at Gly243 to Ala262 is disordered.

The protein belongs to the universal ribosomal protein uL10 family. Component of the mitochondrial ribosome large subunit (39S) which comprises a 16S rRNA and about 50 distinct proteins.

The protein resides in the mitochondrion. The polypeptide is Large ribosomal subunit protein uL10m (Mrpl10) (Mus musculus (Mouse)).